The primary structure comprises 758 residues: MGRDTRSRSRSAGRRGRRRQSQSGSRSRSRSHGRRNRRRREDEGRRRRRRRSRERRSDSEEERWQRSGMRSRSPPRPKWHSRDGSSQSDSGEEQSRGQWARRRRRARSWSPSSSASSSASPGRSQSPRAAAAALSQQQSLQERLRLREERKQQEELMKAFETPEEKRARRLAKKEAKERKKREKMGWGEEYMGYTNTDNPFGDNNLLGTFIWNKALEKKGISHLEEKELKERNKRIQEDNRLELQKVKQLRLEREREKAMREQELEMLQREKEAEHFKTWEEQEDNFHLQQAKLRSKIRIRDGRAKPIDLLAKYISAEDDDLAVEMHEPYTFLNGLTVADMEDLLEDIQVYMELEQGKNADFWRDMTTITEDEISKLRKLEASGKGPGERREGVNASVSSDVQSVFKGKTYNQLQVIFQGIEGKIRAGGPNLDMGYWESLLQQLRAHMARARLRERHQDVLRQKLYKLKQEQGVESEPLFPILKQEPQSPSRSLEPEDAAPTPPGPSSEGGPAEAEVDGATPTEGDGDGDGEGEGEGEAVLMEEDLIQQSLDDYDAGRYSPRLLTAHELPLDAHVLEPDEDLQRLQLSRQQLQVTGDASESAEDIFFRRAKEGMGQDEAQFSVEMPLTGKAYLWADKYRPRKPRFFNRVHTGFEWNKYNQTHYDFDNPPPKIVQGYKFNIFYPDLIDKRSTPEYFLEACADNKDFAILRFHAGPPYEDIAFKIVNREWEYSHRHGFRCQFANGIFQLWFHFKRYRYRR.

2 disordered regions span residues 1–140 and 155–181; these read MGRD…QQSL and ELMK…ERKK. Basic residues-rich tracts occupy residues 8-20 and 27-38; these read RSRS…RRRQ and SRSRSHGRRNRR. Residues 55–65 are compositionally biased toward basic and acidic residues; that stretch reads RRSDSEEERWQ. Residues 108–140 are compositionally biased toward low complexity; sequence SWSPSSSASSSASPGRSQSPRAAAAALSQQQSL. Serine 126 carries the phosphoserine modification. Coiled-coil stretches lie at residues 135 to 185 and 225 to 277; these read SQQQ…REKM and EEKE…AEHF. Positions 155–178 are enriched in basic and acidic residues; sequence ELMKAFETPEEKRARRLAKKEAKE. Residue lysine 469 forms a Glycyl lysine isopeptide (Lys-Gly) (interchain with G-Cter in SUMO2) linkage. A Phosphoserine modification is found at serine 476. The interval 477–536 is disordered; it reads EPLFPILKQEPQSPSRSLEPEDAAPTPPGPSSEGGPAEAEVDGATPTEGDGDGDGEGEGE. A Glycyl lysine isopeptide (Lys-Gly) (interchain with G-Cter in SUMO2) cross-link involves residue lysine 484. A compositionally biased stretch (acidic residues) spans 525 to 536; the sequence is GDGDGDGEGEGE. Tyrosine 559 carries the phosphotyrosine modification.

This sequence belongs to the CACTIN family. In terms of assembly, interacts (via N-terminal domain) with NFKBIL1; the interaction occurs in a pro-inflammatory-independent manner. Does not interact with RELA NF-kappa-B subunit. Identified in the spliceosome C complex. Interacts with SF3B1. Interacts with SDE2. Interacts with SRRM2. Interacts with DHX8. Interacts with isoform 2 of TRIM39 (via domain B box-type).

It is found in the nucleus. The protein resides in the cytoplasm. It localises to the cytosol. In terms of biological role, plays a role in pre-mRNA splicing by facilitating excision of a subset of introns. Required for the splicing of CDCA5/Sororin, a regulator of sister chromatid cohesion. Involved in the regulation of innate immune response. Acts as a negative regulator of Toll-like receptor, interferon-regulatory factor (IRF) and canonical NF-kappa-B signaling pathways. Contributes to the regulation of transcriptional activation of NF-kappa-B target genes in response to endogenous pro-inflammatory stimuli. In Homo sapiens (Human), this protein is Splicing factor Cactin (CACTIN).